The primary structure comprises 89 residues: Small ribosomal subunit protein uS15 (89 aa).

It belongs to the universal ribosomal protein uS15 family. In terms of assembly, part of the 30S ribosomal subunit. Forms a bridge to the 50S subunit in the 70S ribosome, contacting the 23S rRNA.

Its function is as follows. One of the primary rRNA binding proteins, it binds directly to 16S rRNA where it helps nucleate assembly of the platform of the 30S subunit by binding and bridging several RNA helices of the 16S rRNA. Forms an intersubunit bridge (bridge B4) with the 23S rRNA of the 50S subunit in the ribosome. The sequence is that of Small ribosomal subunit protein uS15 from Anaeromyxobacter dehalogenans (strain 2CP-1 / ATCC BAA-258).